Here is a 364-residue protein sequence, read N- to C-terminus: Nucleoporin SEH1 (364 aa).

WD repeat units follow at residues 10-49, 55-96, 111-152, 160-210, 217-258, and 276-315; these read DHKDLIHDVSYDFHGRRMATCSSDQSVKVWDKGDDGEWHC, THSG…SNDK, DSRT…NLSQ, SCKL…RKYA, TVTD…RESA, and SHNSQVWRVSWNITSTLLASSGDDGCVRLWKANYMDNWKC.

It belongs to the WD repeat SEC13 family. Component of the Nup107-160 subcomplex of the nuclear pore complex (NPC). The Nup107-160 subcomplex includes NUP160, NUP133, NUP107, NUP98, NUP85, NUP43, NUP37, SEH1 and SEC13. Component of the GATOR2 subcomplex, composed of MIOS, SEC13, SEH1L, WDR24 and WDR59. The GATOR2 complex interacts with CASTOR1 and CASTOR2; the interaction is negatively regulated by arginine. The GATOR2 complex interacts with SESN1, SESN2 and SESN3; the interaction is negatively regulated by amino acids.

It localises to the chromosome. Its subcellular location is the centromere. The protein resides in the kinetochore. It is found in the nucleus. The protein localises to the nuclear pore complex. It localises to the lysosome membrane. With respect to regulation, the GATOR2 complex is negatively regulated by the upstream amino acid sensors CASTOR1 and SESN2, which sequester the GATOR2 complex in absence of amino acids. In the presence of abundant amino acids, GATOR2 is released from CASTOR1 and SESN2 and activated. Functionally, component of the Nup107-160 subcomplex of the nuclear pore complex (NPC). The Nup107-160 subcomplex is required for the assembly of a functional NPC. The Nup107-160 subcomplex is also required for normal kinetochore microtubule attachment, mitotic progression and chromosome segregation. This subunit plays a role in recruitment of the Nup107-160 subcomplex to the kinetochore. In terms of biological role, as a component of the GATOR2 complex, functions as an activator of the amino acid-sensing branch of the mTORC1 signaling pathway. The GATOR2 complex indirectly activates mTORC1 through the inhibition of the GATOR1 subcomplex. GATOR2 probably acts as an E3 ubiquitin-protein ligase toward GATOR1. In the presence of abundant amino acids, the GATOR2 complex mediates ubiquitination of the NPRL2 core component of the GATOR1 complex, leading to GATOR1 inactivation. In the absence of amino acids, GATOR2 is inhibited, activating the GATOR1 complex. The sequence is that of Nucleoporin SEH1 (seh1l) from Danio rerio (Zebrafish).